Consider the following 1365-residue polypeptide: Polyprotein ABA-1 (1365 aa).

This sequence belongs to the NPA family. Nematode polyprotein allergens (NPAs) are synthesized as large polypeptides that are subsequently proteolytically cleaved to active polypeptide units. As to expression, pseudocoelomic fluid.

Has high binding affinity for fatty acids and retinoids. The polypeptide is Polyprotein ABA-1 (ABA-1) (Ascaris suum (Pig roundworm)).